A 479-amino-acid polypeptide reads, in one-letter code: Proline--tRNA ligase (479 aa).

Belongs to the class-II aminoacyl-tRNA synthetase family. ProS type 3 subfamily. Homodimer.

It localises to the cytoplasm. It carries out the reaction tRNA(Pro) + L-proline + ATP = L-prolyl-tRNA(Pro) + AMP + diphosphate. Its function is as follows. Catalyzes the attachment of proline to tRNA(Pro) in a two-step reaction: proline is first activated by ATP to form Pro-AMP and then transferred to the acceptor end of tRNA(Pro). The polypeptide is Proline--tRNA ligase (Agathobacter rectalis (strain ATCC 33656 / DSM 3377 / JCM 17463 / KCTC 5835 / VPI 0990) (Eubacterium rectale)).